Reading from the N-terminus, the 601-residue chain is Putative helicase 7 (601 aa).

The 166-residue stretch at 17–182 (QSFLMSDKNL…IIDAEIIKTD (166 aa)) folds into the Helicase ATP-binding domain. ATP is bound at residue 30 to 37 (APTGTGKS). Positions 129–132 (DEIH) match the DEAH box motif. In terms of domain architecture, Helicase C-terminal spans 208–375 (LKEDFIKKMV…VLEDFLLALI (168 aa)).

The chain is Putative helicase 7 (SIFV0007) from Saccharolobus islandicus (Sulfolobus islandicus).